A 453-amino-acid polypeptide reads, in one-letter code: Protein LOW PSII ACCUMULATION 1, chloroplastic (453 aa).

The transit peptide at 1 to 92 (MAVATAPSLN…LDLFKRGRVK (92 aa)) directs the protein to the chloroplast. TPR repeat units lie at residues 75-108 (AELC…APNP) and 112-145 (QAAY…YNLK). The next 2 membrane-spanning stretches (helical) occupy residues 202–222 (FFYF…VPRL) and 238–258 (TTGN…LFLW).

Interacts with psbA, but not with psbD, petB, ALB3, LPA2 or LPA3. Is not a component of the PSII complex.

It localises to the plastid. The protein resides in the chloroplast thylakoid membrane. Chaperone required for efficient photosystem II (PSII) assembly. Binds to psbA during de novo biogenesis of PSII. The protein is Protein LOW PSII ACCUMULATION 1, chloroplastic (LPA1) of Arabidopsis thaliana (Mouse-ear cress).